The chain runs to 1137 residues: Ribonucleoside-diphosphate reductase large subunit (1137 aa).

The interval 1 to 32 (MASRPAASSPVEARAPVGGQEAGGPSAATQGE) is disordered. An RIP homotypic interaction motif (RHIM) motif is present at residues 64-84 (SYRISDNNFVQCGSNCTMIID). Disordered regions lie at residues 124 to 159 (GGTP…FTLG) and 173 to 315 (AVFG…YPVP). Positions 131 to 141 (AGTSTGTQTAD) are enriched in polar residues. Residues 196-206 (SDSDDSEDTDS) show a composition bias toward acidic residues. The span at 281–290 (AGAGLAADPA) shows a compositional bias: low complexity. The span at 291-304 (VARDDAEGLSDPRP) shows a compositional bias: basic and acidic residues. Substrate-binding positions include Thr-566, 581 to 582 (SC), Gly-612, 791 to 795 (NLCTE), and 968 to 972 (PTAAS). The cysteines at positions 582 and 808 are disulfide-linked. Asn-791 (proton acceptor) is an active-site residue. The active-site Cysteine radical intermediate is the Cys-793. Glu-795 functions as the Proton acceptor in the catalytic mechanism.

Belongs to the ribonucleoside diphosphate reductase large chain family. Heterotetramer composed of a homodimer of the large subunit (R1) and a homodimer of the small subunit (R2). Larger multisubunit protein complex are also active, composed of (R1)n(R2)n. Self-assembles (via RIP homotypic interaction motif/RHIM) into homomeric fibrillar amyloid structures. Interacts (via RHIM) with human RIPK1 (via RHIM). Interacts (via RHIM) with human RIPK3 (via RHIM); the interaction leads to heteromeric amyloid assemblies. Interacts (via RHIM) with human ZBP1 (via RHIM); the interaction leads to heteromeric amyloid assemblies. Interacts (via C-terminus) with host CASP8.

The enzyme catalyses a 2'-deoxyribonucleoside 5'-diphosphate + [thioredoxin]-disulfide + H2O = a ribonucleoside 5'-diphosphate + [thioredoxin]-dithiol. Its function is as follows. Ribonucleoside-diphosphate reductase holoenzyme that provides the precursors necessary for viral DNA synthesis. Allows virus growth in non-dividing cells, as well as reactivation from latency in infected hosts. Catalyzes the biosynthesis of deoxyribonucleotides from the corresponding ribonucleotides. Prevents host necroptosis by targeting host RIPK1 and RIPK3, thereby hampering the formation of necroptotic RIPK1-RIPK3 complexes. Forms hetero-amyloid structures with host proteins RIPK3 or ZBP1 which may prevent RIPK3- and ZBP1-mediated necroptosis. In addition, inhibits extrinsic apoptosis by targeting host CASP8. The sequence is that of Ribonucleoside-diphosphate reductase large subunit from Human herpesvirus 1 (strain 17) (HHV-1).